Here is a 473-residue protein sequence, read N- to C-terminus: Photosystem II CP43 reaction center protein (473 aa).

Positions 1–14 (MKTLYSLRRSYPVE) are excised as a propeptide. Threonine 15 carries the N-acetylthreonine modification. Threonine 15 carries the post-translational modification Phosphothreonine. 5 helical membrane-spanning segments follow: residues 69–93 (LFEV…PHLA), 134–155 (LIGP…KDRN), 178–200 (KALY…RKIT), 255–275 (KPFA…LSYS), and 291–312 (WFNN…ASQA). [CaMn4O5] cluster is bound at residue glutamate 367. Residues 447–471 (RARAAAAGFEKGIDRDFEPVLSMTP) traverse the membrane as a helical segment.

Belongs to the PsbB/PsbC family. PsbC subfamily. As to quaternary structure, PSII is composed of 1 copy each of membrane proteins PsbA, PsbB, PsbC, PsbD, PsbE, PsbF, PsbH, PsbI, PsbJ, PsbK, PsbL, PsbM, PsbT, PsbX, PsbY, PsbZ, Psb30/Ycf12, at least 3 peripheral proteins of the oxygen-evolving complex and a large number of cofactors. It forms dimeric complexes. Binds multiple chlorophylls and provides some of the ligands for the Ca-4Mn-5O cluster of the oxygen-evolving complex. It may also provide a ligand for a Cl- that is required for oxygen evolution. PSII binds additional chlorophylls, carotenoids and specific lipids. is required as a cofactor.

Its subcellular location is the plastid. It is found in the chloroplast thylakoid membrane. Its function is as follows. One of the components of the core complex of photosystem II (PSII). It binds chlorophyll and helps catalyze the primary light-induced photochemical processes of PSII. PSII is a light-driven water:plastoquinone oxidoreductase, using light energy to abstract electrons from H(2)O, generating O(2) and a proton gradient subsequently used for ATP formation. In Pinus thunbergii (Japanese black pine), this protein is Photosystem II CP43 reaction center protein.